A 325-amino-acid polypeptide reads, in one-letter code: Large ribosomal subunit protein uL1m (325 aa).

The N-terminal 50 residues, 1–50 (MAAAVRCMGRALIHHQRHSLSKMVYQTSLCSCSVNIRVPNRHFAAATKSA), are a transit peptide targeting the mitochondrion.

This sequence belongs to the universal ribosomal protein uL1 family. As to quaternary structure, component of the mitochondrial large ribosomal subunit (mt-LSU). Mature mammalian 55S mitochondrial ribosomes consist of a small (28S) and a large (39S) subunit. The 28S small subunit contains a 12S ribosomal RNA (12S mt-rRNA) and 30 different proteins. The 39S large subunit contains a 16S rRNA (16S mt-rRNA), a copy of mitochondrial valine transfer RNA (mt-tRNA(Val)), which plays an integral structural role, and 52 different proteins.

It localises to the mitochondrion. This chain is Large ribosomal subunit protein uL1m (MRPL1), found in Homo sapiens (Human).